A 664-amino-acid polypeptide reads, in one-letter code: Pentatricopeptide repeat-containing protein At1g10910, chloroplastic (664 aa).

The N-terminal 72 residues, 1–72, are a transit peptide targeting the chloroplast; that stretch reads METPLLVGLE…KRHSNSYLAR (72 aa). PPR repeat units lie at residues 165–199, 200–235, 236–270, 271–305, 306–340, 341–375, 376–406, 411–445, and 446–480; these read NVYICNSILSCLVKNGKLDSCIKLFDQMKRDGLKP, DVVTYNTLLAGCIKVKNGYPKAIELIGELPHNGIQM, DSVMYGTVLAICASNGRSEEAENFIQQMKVEGHSP, NIYHYSSLLNSYSWKGDYKKADELMTEMKSIGLVP, NKVMMTTLLKVYIKGGLFDRSRELLSELESAGYAE, NEMPYCMLMDGLSKAGKLEEARSIFDDMKGKGVRS, DGYANSIMISALCRSKRFKEAKELSRDSETT, DLVMLNTMLCAYCRAGEMESVMRMMKKMDEQAVSP, and DYNTFHILIKYFIKEKLHLLAYQTTLDMHSKGHRL.

It belongs to the PPR family. P subfamily.

It is found in the plastid. The protein resides in the chloroplast. The sequence is that of Pentatricopeptide repeat-containing protein At1g10910, chloroplastic from Arabidopsis thaliana (Mouse-ear cress).